The sequence spans 440 residues: UDP-N-acetylmuramoylalanine--D-glutamate ligase (440 aa).

128–134 lines the ATP pocket; that stretch reads GTNGKTT.

The protein belongs to the MurCDEF family.

Its subcellular location is the cytoplasm. It catalyses the reaction UDP-N-acetyl-alpha-D-muramoyl-L-alanine + D-glutamate + ATP = UDP-N-acetyl-alpha-D-muramoyl-L-alanyl-D-glutamate + ADP + phosphate + H(+). It functions in the pathway cell wall biogenesis; peptidoglycan biosynthesis. In terms of biological role, cell wall formation. Catalyzes the addition of glutamate to the nucleotide precursor UDP-N-acetylmuramoyl-L-alanine (UMA). The sequence is that of UDP-N-acetylmuramoylalanine--D-glutamate ligase from Lawsonia intracellularis (strain PHE/MN1-00).